A 198-amino-acid polypeptide reads, in one-letter code: Ribosomal RNA small subunit methyltransferase G (198 aa).

S-adenosyl-L-methionine is bound by residues Gly-74, Phe-79, 123–124 (IQ), and Arg-136.

The protein belongs to the methyltransferase superfamily. RNA methyltransferase RsmG family.

Its subcellular location is the cytoplasm. It catalyses the reaction guanosine(527) in 16S rRNA + S-adenosyl-L-methionine = N(7)-methylguanosine(527) in 16S rRNA + S-adenosyl-L-homocysteine. In terms of biological role, specifically methylates the N7 position of guanine in position 527 of 16S rRNA. This Orientia tsutsugamushi (strain Ikeda) (Rickettsia tsutsugamushi) protein is Ribosomal RNA small subunit methyltransferase G.